A 391-amino-acid chain; its full sequence is 4-coumarate--CoA ligase (391 aa).

Belongs to the ATP-dependent AMP-binding enzyme family.

The catalysed reaction is (E)-4-coumarate + ATP + CoA = (E)-4-coumaroyl-CoA + AMP + diphosphate. Functionally, converts p-coumaric acid into p-coumaryl CoA. This is necessary for the activation of the photoactive yellow protein (PYP) chromophore. In Halorhodospira halophila (Ectothiorhodospira halophila), this protein is 4-coumarate--CoA ligase (pcl).